The sequence spans 425 residues: MGEDAAQAEKFQHPGSDMRQEKPSSPSPMPSSTPSPSLNLGNTEEAIRDNSQVNAVTVLTLLDKLVNMLDAVQENQHKMEQRQISLEGSVKGIQNDLTKLSKYQASTSNTVSKLLEKSRKVSAHTRAVKERMDRQCAQVKRLENNHAQLLRRNHFKVLIFQEENEIPASVFVKQPVSGAVEGKEELPDENKSLEETLHTVDLSSDDDLPHDEEALEDSAEEKVEESRAEKIKRSSLKKVDSLKKAFSRQNIEKKMNKLGTKIVSVERREKIKKSLTSNHQKISSGKSSPFKVSPLTFGRKKVREGESHAENETKSEDLPSSEQMPNDQEEESFAEGHSEASLASALVEGEIAEEAAEKATSRGSNSGMDSNIDLTIVEDEEEESVALEQAQKVRYEGSYALTSEEAERSDGDPVQPAVLQVHQTS.

Residues 1–42 (MGEDAAQAEKFQHPGSDMRQEKPSSPSPMPSSTPSPSLNLGN) are disordered. Position 2 is an N-acetylglycine (G2). The tract at residues 2–168 (GEDAAQAEKF…IFQEENEIPA (167 aa)) is interaction with CAVIN1. Over residues 10-22 (KFQHPGSDMRQEK) the composition is skewed to basic and acidic residues. 4 positions are modified to phosphoserine: S27, S35, S37, and S51. 2 coiled-coil regions span residues 61-82 (LLDK…MEQR) and 125-154 (TRAV…RRNH). Positions 62 to 100 (LDKLVNMLDAVQENQHKMEQRQISLEGSVKGIQNDLTKL) are leucine-zipper. Residues T196 and T199 each carry the phosphothreonine modification. Disordered regions lie at residues 199-234 (TVDL…IKRS) and 271-425 (IKKS…HQTS). S203, S204, and S218 each carry phosphoserine. The span at 203–219 (SSDDDLPHDEEALEDSA) shows a compositional bias: acidic residues. A coiled-coil region spans residues 210 to 268 (HDEEALEDSAEEKVEESRAEKIKRSSLKKVDSLKKAFSRQNIEKKMNKLGTKIVSVERR). A compositionally biased stretch (basic and acidic residues) spans 220–234 (EEKVEESRAEKIKRS). Residues 274 to 287 (SLTSNHQKISSGKS) are compositionally biased toward polar residues. Phosphoserine occurs at positions 283, 284, 287, 288, and 293. Basic and acidic residues predominate over residues 303 to 317 (REGESHAENETKSED). Phosphoserine occurs at positions 332, 341, 366, and 370. Phosphothreonine is present on T375. The span at 376–385 (IVEDEEEESV) shows a compositional bias: acidic residues. Y395 is subject to Phosphotyrosine. S403 carries the post-translational modification Phosphoserine.

It belongs to the CAVIN family. As to quaternary structure, component of the CAVIN complex composed of CAVIN1, CAVIN2, CAVIN3 and CAVIN4. Binds to PRKCA in the presence of phosphatidylserine. Interacts with CAVIN4; this augments the transactivation of NPPA by CAVIN4. Interacts with CAVIN1. Interacts with CAV3. Phosphorylated on Ser residues. As to expression, highly expressed in heart and lung, and expressed at lower levels in brain, kidney, liver, pancreas, placenta, and skeletal muscle.

The protein localises to the cytoplasm. Its subcellular location is the cytosol. The protein resides in the membrane. It is found in the caveola. In terms of biological role, plays an important role in caveolar biogenesis and morphology. Regulates caveolae morphology by inducing membrane curvature within caveolae. Plays a role in caveola formation in a tissue-specific manner. Required for the formation of caveolae in the lung and fat endothelia but not in the heart endothelia. Negatively regulates the size or stability of CAVIN complexes in the lung endothelial cells. May play a role in targeting PRKCA to caveolae. This chain is Caveolae-associated protein 2, found in Homo sapiens (Human).